The chain runs to 363 residues: 3-isopropylmalate dehydrogenase A (363 aa).

Residue 78–89 (GPKWGTGAVRPE) participates in NAD(+) binding. Residues Arg-96, Arg-106, Arg-135, and Asp-222 each coordinate substrate. 3 residues coordinate Mg(2+): Asp-222, Asp-247, and Asp-251. An NAD(+)-binding site is contributed by 287-299 (GSAPDIAGKGIVN).

The protein belongs to the isocitrate and isopropylmalate dehydrogenases family. As to quaternary structure, homodimer. Mg(2+) is required as a cofactor. The cofactor is Mn(2+).

The protein resides in the cytoplasm. It catalyses the reaction (2R,3S)-3-isopropylmalate + NAD(+) = 4-methyl-2-oxopentanoate + CO2 + NADH. The protein operates within amino-acid biosynthesis; L-leucine biosynthesis; L-leucine from 3-methyl-2-oxobutanoate: step 3/4. Its function is as follows. Catalyzes the oxidation of 3-carboxy-2-hydroxy-4-methylpentanoate (3-isopropylmalate) to 3-carboxy-4-methyl-2-oxopentanoate. The product decarboxylates to 4-methyl-2 oxopentanoate. This chain is 3-isopropylmalate dehydrogenase A (leu2A), found in Aspergillus niger.